We begin with the raw amino-acid sequence, 431 residues long: Large envelope protein (431 aa).

Residue Gly2 is the site of N-myristoyl glycine; by host attachment. The segment at 2 to 148 (GNNIKVTFNP…PPLRDTHPHL (147 aa)) is pre-S1. The pre-S stretch occupies residues 2–207 (GNNIKVTFNP…PSTTGDPALS (206 aa)). The Virion surface; in external conformation segment spans residues 2–214 (GNNIKVTFNP…ALSPEMSPSS (213 aa)). The Intravirion; in internal conformation segment spans residues 2–286 (GNNIKVTFNP…NGFRWMYLRR (285 aa)). Asn3 is a glycosylation site (N-linked (GlcNAc...) asparagine). Residues 115-146 (IPRGLVPPQTPTNRDQGRKPTPPTPPLRDTHP) are disordered. Residues 149 to 207 (TMKNQTFRLQGFVDGLRDLTTTERYHNAYGDPFTTLSPVVPTVSTILSPPSTTGDPALS) form a pre-S2 region. A helical transmembrane segment spans residues 215–235 (LLGLLAGLQVVYFLWTKILTI). Topologically, residues 236-286 (AQNLDWWWTSLSFPGGIPECTGQNSQFQTCKHLPTSCPPTCNGFRWMYLRR) are intravirion; in external conformation. A helical membrane pass occupies residues 287-307 (FIIYLLVLLLCLIFLLVLLDW). Residues 308-379 (KGLIPVCPLQ…WALARFSWLN (72 aa)) are Virion surface-facing. The N-linked (GlcNAc...) asparagine; by host glycan is linked to Asn351. The chain crosses the membrane as a helical span at residues 380–400 (LLVPLLQWLGGISLIAWFLLI). Residues 401 to 406 (WMIWFW) are Intravirion-facing. A helical transmembrane segment spans residues 407–429 (GPALLSILPPFIPIFVLFFLIWV). The Virion surface segment spans residues 430 to 431 (YI).

Belongs to the orthohepadnavirus major surface antigen family. In terms of assembly, in its internal form (Li-HBsAg), interacts with the capsid protein and with the isoform S. Interacts with host chaperone CANX. As to quaternary structure, associates with host chaperone CANX through its pre-S2 N glycan; this association may be essential for isoform M proper secretion. Interacts with isoform L. Interacts with the antigens of satellite virus HDV (HDVAgs); this interaction is required for encapsidation of HDV genomic RNA. Isoform M is N-terminally acetylated by host at a ratio of 90%, and N-glycosylated by host at the pre-S2 region. Post-translationally, myristoylated.

Its subcellular location is the virion membrane. Functionally, the large envelope protein exists in two topological conformations, one which is termed 'external' or Le-HBsAg and the other 'internal' or Li-HBsAg. In its external conformation the protein attaches the virus to cell receptors and thereby initiating infection. This interaction determines the species specificity and liver tropism. This attachment induces virion internalization predominantly through caveolin-mediated endocytosis. The large envelope protein also assures fusion between virion membrane and endosomal membrane. In its internal conformation the protein plays a role in virion morphogenesis and mediates the contact with the nucleocapsid like a matrix protein. Its function is as follows. The middle envelope protein plays an important role in the budding of the virion. It is involved in the induction of budding in a nucleocapsid independent way. In this process the majority of envelope proteins bud to form subviral lipoprotein particles of 22 nm of diameter that do not contain a nucleocapsid. This is Large envelope protein from Woodchuck hepatitis B virus (isolate 59) (WHV).